A 353-amino-acid polypeptide reads, in one-letter code: Fe(3+) ions import ATP-binding protein FbpC (353 aa).

One can recognise an ABC transporter domain in the interval V9–M239. G41–T48 provides a ligand contact to ATP.

It belongs to the ABC transporter superfamily. Fe(3+) ion importer (TC 3.A.1.10) family. The complex is composed of two ATP-binding proteins (FbpC), two transmembrane proteins (FbpB) and a solute-binding protein (FbpA).

Its subcellular location is the cell inner membrane. It carries out the reaction Fe(3+)(out) + ATP + H2O = Fe(3+)(in) + ADP + phosphate + H(+). In terms of biological role, part of the ABC transporter complex FbpABC involved in Fe(3+) ions import. Responsible for energy coupling to the transport system. In Brucella abortus (strain 2308), this protein is Fe(3+) ions import ATP-binding protein FbpC.